Here is a 510-residue protein sequence, read N- to C-terminus: Conditioned medium factor receptor 1 (510 aa).

Topologically, residues 1–36 are cytoplasmic; that stretch reads MDSKYIQKTLSAITEQITKNAAVQKVLDNKFVKEHK. A helical membrane pass occupies residues 37–55; the sequence is YAAAAATVGLGVVAATTIV. Topologically, residues 56 to 510 are extracellular; sequence KAVNCEGKRY…QGKKQIKKLD (455 aa).

It localises to the membrane. Functionally, receptor for cmfA, that appears to mediate the G-independent cmfA signal transduction. The polypeptide is Conditioned medium factor receptor 1 (cmfB) (Dictyostelium discoideum (Social amoeba)).